The following is a 648-amino-acid chain: EF-hand domain-containing protein 1 (648 aa).

Residues 1–45 (MGTNPVHGLPFLPGSSFTDSTKTAFHRSQTLNYRNGYAVVRRPTM) are required for its localization in the mitotic spindle and interaction with alpha-tubulin. 3 DM10 domains span residues 93–198 (DKKV…ESQG), 239–359 (DKQV…KDKF), and 416–520 (DNKV…ESNA). Residues 582–617 (SYKENLRETFQMYDKDESGYVDRETFFKICETLNVP) enclose the EF-hand domain.

Microtubule inner protein component of sperm flagellar doublet microtubules. Interacts with the C-terminus of CACNA1E. Interacts with alpha-tubulin. In terms of tissue distribution, expressed in adult brain including hippocampus, cerebellum, cerebral cortex, thalamus, hypothalamus, amygdala and upper brainstem. Expressed in soma and dentrites of pyramidal neurons of the hippocampal CA1 region, pyramidal neurons of the cerebral cortex and Purkinje cells of cerebellum. Highly expressed in testis, trachea, and oviduct, moderately in lung, and slightly in brain. Highly expressed in sperm flagella and tracheal cilia (at protein level).

It localises to the cytoplasm. Its subcellular location is the cytoskeleton. It is found in the cilium axoneme. The protein localises to the flagellum axoneme. The protein resides in the microtubule organizing center. It localises to the centrosome. Its subcellular location is the spindle. It is found in the spindle pole. Functionally, microtubule inner protein (MIP) part of the dynein-decorated doublet microtubules (DMTs) in cilia axoneme, which is required for motile cilia beating. Microtubule-associated protein which regulates cell division and neuronal migration during cortical development. Necessary for radial and tangential cell migration during brain development, possibly acting as a regulator of cell morphology and process formation during migration. May enhance calcium influx through CACNA1E and stimulate programmed cell death. Overexpression of EFHC1 in hippocampal primary culture neurons induced apoptosis. In Mus musculus (Mouse), this protein is EF-hand domain-containing protein 1 (Efhc1).